We begin with the raw amino-acid sequence, 397 residues long: Tryptophan synthase beta chain (397 aa).

An N6-(pyridoxal phosphate)lysine modification is found at Lys-87.

It belongs to the TrpB family. In terms of assembly, tetramer of two alpha and two beta chains. The cofactor is pyridoxal 5'-phosphate.

It carries out the reaction (1S,2R)-1-C-(indol-3-yl)glycerol 3-phosphate + L-serine = D-glyceraldehyde 3-phosphate + L-tryptophan + H2O. Its pathway is amino-acid biosynthesis; L-tryptophan biosynthesis; L-tryptophan from chorismate: step 5/5. In terms of biological role, the beta subunit is responsible for the synthesis of L-tryptophan from indole and L-serine. The polypeptide is Tryptophan synthase beta chain (Citrobacter koseri (strain ATCC BAA-895 / CDC 4225-83 / SGSC4696)).